We begin with the raw amino-acid sequence, 860 residues long: DNA mismatch repair protein MutS (860 aa).

Residue 608–615 (GPNMAGKS) coordinates ATP.

Belongs to the DNA mismatch repair MutS family.

In terms of biological role, this protein is involved in the repair of mismatches in DNA. It is possible that it carries out the mismatch recognition step. This protein has a weak ATPase activity. This Borrelia turicatae (strain 91E135) protein is DNA mismatch repair protein MutS.